Consider the following 469-residue polypeptide: Transcription factor E2FB (469 aa).

Disordered regions lie at residues 1–28 (MSEE…PPLV) and 84–118 (QTPV…AGSP). Polar residues-rich tracts occupy residues 8-22 (QFPS…SLSS) and 100-118 (SAKS…AGSP). The DNA-binding element occupies 129–194 (RYDSSLGLLT…TLKNRIQWKG (66 aa)). Residues 202–246 (ETIESIANLQDEVQNLAAEEARLDDQIRESQERLTSLSEDENNKR) are a coiled coil. The interval 210–238 (LQDEVQNLAAEEARLDDQIRESQERLTSL) is leucine-zipper. The tract at residues 319–374 (PQADEPSNVPDEPSNVPDVPSNLPSTSGLPENHDVSMPMKEESTERNMETQEVDDT) is disordered. Positions 349 to 374 (ENHDVSMPMKEESTERNMETQEVDDT) are enriched in basic and acidic residues. The retinoblastoma protein binding stretch occupies residues 403–419 (DYWFRSEVGEVSITDMW). The disordered stretch occupies residues 426 to 469 (DWNQMITFDQDHAGPSDNKILEQPQTPSSPTPEESTATRSPTGS). Residues 447–469 (EQPQTPSSPTPEESTATRSPTGS) are compositionally biased toward low complexity.

This sequence belongs to the E2F/DP family. Heterodimer with DP proteins. Interacts (via dimerization domain) preferentially with DPA, but also with DPB. Interacts with PURA1 and retinoblastoma-related protein RBR1. Component of a DREAM-like complex which modulates a variety of developmentally regulated genes and of the mitotic genes in proliferating and differentiated cells. Interacts with MYB3R4 only at early stages of leaves development. In terms of processing, phosphorylated. Expressed in proliferating cells and several differentiated tissues. Detected in inflorescence and shoot apical meristems, cotyledonary vascular tissues, leaf primordia, young leaves, base of trichomes, central cylinder and elongation zone of roots, lateral root primordia, flowers, pistils of immature flowers and pollen grains.

It localises to the cytoplasm. It is found in the nucleus. Functionally, transcription activator that binds DNA cooperatively with DP proteins through the E2 recognition site, 5'-TTTC[CG]CGC-3' found in the promoter region of a number of genes whose products are involved in cell cycle regulation or in DNA replication. The binding of retinoblastoma-related proteins represses transactivation. Involved in the control of cell-cycle progression from G1 to S phase and from G2 to M phase. Stimulates cell proliferation and delays differentiation. Represses cell enlargement and endoreduplication in auxin-free conditions. This Arabidopsis thaliana (Mouse-ear cress) protein is Transcription factor E2FB (E2FB).